Here is a 187-residue protein sequence, read N- to C-terminus: uncharacterized protein (187 aa).

This is an uncharacterized protein from Homo sapiens (Human).